A 510-amino-acid chain; its full sequence is Cytochrome P450 4A6 (510 aa).

A propeptide spanning residues 1 to 4 (MSVS) is cleaved from the precursor. Positions 321 and 457 each coordinate heme.

Belongs to the cytochrome P450 family. The cofactor is heme. Liver; kidney.

Its subcellular location is the endoplasmic reticulum membrane. The protein localises to the microsome membrane. It carries out the reaction an omega-methyl-long-chain fatty acid + reduced [NADPH--hemoprotein reductase] + O2 = an omega-hydroxy-long-chain fatty acid + oxidized [NADPH--hemoprotein reductase] + H2O + H(+). In terms of biological role, cytochromes P450 are a group of heme-thiolate monooxygenases. In liver microsomes, this enzyme is involved in an NADPH-dependent electron transport pathway. It oxidizes a variety of structurally unrelated compounds, including steroids, fatty acids, and xenobiotics. The kidney P-450 system is rather specialized for the omega-hydroxylation of fatty acids. Both P450-KA1 and P450-KA2 catalyze the omega- and (omega-1)-hydroxylation of various fatty acids with no drug-metabolizing activity, and hydroxylate prostaglandin A1 and A2 solely at the omega-position. This Oryctolagus cuniculus (Rabbit) protein is Cytochrome P450 4A6 (CYP4A6).